The following is a 129-amino-acid chain: Small ribosomal subunit protein uS11 (129 aa).

The protein belongs to the universal ribosomal protein uS11 family. Part of the 30S ribosomal subunit. Interacts with proteins S7 and S18. Binds to IF-3.

Functionally, located on the platform of the 30S subunit, it bridges several disparate RNA helices of the 16S rRNA. Forms part of the Shine-Dalgarno cleft in the 70S ribosome. This chain is Small ribosomal subunit protein uS11, found in Haemophilus ducreyi (strain 35000HP / ATCC 700724).